The primary structure comprises 568 residues: Urease subunit alpha (568 aa).

In terms of domain architecture, Urease spans G130 to F568. Positions 135, 137, and 218 each coordinate Ni(2+). Residue K218 is modified to N6-carboxylysine. H220 lines the substrate pocket. Ni(2+)-binding residues include H247 and H273. The active-site Proton donor is H321. D361 contributes to the Ni(2+) binding site.

It belongs to the metallo-dependent hydrolases superfamily. Urease alpha subunit family. As to quaternary structure, heterotrimer of UreA (gamma), UreB (beta) and UreC (alpha) subunits. Three heterotrimers associate to form the active enzyme. It depends on Ni cation as a cofactor. Post-translationally, carboxylation allows a single lysine to coordinate two nickel ions.

The protein resides in the cytoplasm. The catalysed reaction is urea + 2 H2O + H(+) = hydrogencarbonate + 2 NH4(+). The protein operates within nitrogen metabolism; urea degradation; CO(2) and NH(3) from urea (urease route): step 1/1. The polypeptide is Urease subunit alpha (Nitrosospira multiformis (strain ATCC 25196 / NCIMB 11849 / C 71)).